Reading from the N-terminus, the 232-residue chain is Ribose-5-phosphate isomerase A (232 aa).

Residues 29–32 (TGST), 84–87 (DGAD), and 97–100 (KGGG) each bind substrate. The Proton acceptor role is filled by E106. K124 is a binding site for substrate.

This sequence belongs to the ribose 5-phosphate isomerase family. In terms of assembly, homodimer.

It catalyses the reaction aldehydo-D-ribose 5-phosphate = D-ribulose 5-phosphate. The protein operates within carbohydrate degradation; pentose phosphate pathway; D-ribose 5-phosphate from D-ribulose 5-phosphate (non-oxidative stage): step 1/1. Its function is as follows. Catalyzes the reversible conversion of ribose-5-phosphate to ribulose 5-phosphate. This chain is Ribose-5-phosphate isomerase A, found in Brucella suis biovar 1 (strain 1330).